A 278-amino-acid chain; its full sequence is 4-diphosphocytidyl-2-C-methyl-D-erythritol kinase (278 aa).

Residue Lys-9 is part of the active site. 93 to 103 serves as a coordination point for ATP; it reads PLGGGLGGGSS. Asp-135 is an active-site residue.

The protein belongs to the GHMP kinase family. IspE subfamily.

The enzyme catalyses 4-CDP-2-C-methyl-D-erythritol + ATP = 4-CDP-2-C-methyl-D-erythritol 2-phosphate + ADP + H(+). It functions in the pathway isoprenoid biosynthesis; isopentenyl diphosphate biosynthesis via DXP pathway; isopentenyl diphosphate from 1-deoxy-D-xylulose 5-phosphate: step 3/6. Its function is as follows. Catalyzes the phosphorylation of the position 2 hydroxy group of 4-diphosphocytidyl-2C-methyl-D-erythritol. In Nitrosomonas europaea (strain ATCC 19718 / CIP 103999 / KCTC 2705 / NBRC 14298), this protein is 4-diphosphocytidyl-2-C-methyl-D-erythritol kinase.